The primary structure comprises 177 residues: MSRVAKAPVAIPAGVEVKLNGQEVTVKGSKGELTRVLNSAVVIAQEENNLTFGPKEGVTNAWAQAGTARALVNNMVVGVTEGFTKKLTLKGVGYRAAMKGNAVGLTLGFSHPVEHALPEGIKAECPSQTEIVITGCDKQVVGQVAADIRSYRAPEPYKGKGVRYADENVRTKEAKKK.

It belongs to the universal ribosomal protein uL6 family. As to quaternary structure, part of the 50S ribosomal subunit.

In terms of biological role, this protein binds to the 23S rRNA, and is important in its secondary structure. It is located near the subunit interface in the base of the L7/L12 stalk, and near the tRNA binding site of the peptidyltransferase center. The protein is Large ribosomal subunit protein uL6 of Vibrio atlanticus (strain LGP32) (Vibrio splendidus (strain Mel32)).